Reading from the N-terminus, the 336-residue chain is MAKSLNILIAALSLIAFSPFCLCSKAYGSGGYLFPQFYDQSCPKAQEIVQSIVAKAFEHDPRMPASLLRLHFHDCFVKGCDASILLDSSGTIISEKRSNPNRNSARGFELIEEIKHALEQECPETVSCADILALAARDSTVITGGPSWEVPLGRRDARGASLSGSNNDIPAPNNTFQTILTKFKRQGLDLVDLVSLSGSHTIGNSRCTSFRQRLYNQSGNGKPDMTLSQYYATLLRQRCPRSGGDQTLFFLDFATPFKFDNHYFKNLIMYKGLLSSDEILFTKNKQSKELVELYAENQEAFFEQFAKSMVKMGNISPLTGAKGEIRRICRRVNHAY.

Residues 1-23 (MAKSLNILIAALSLIAFSPFCLC) form the signal peptide. Intrachain disulfides connect cysteine 42–cysteine 122, cysteine 75–cysteine 80, cysteine 128–cysteine 329, and cysteine 207–cysteine 239. Histidine 73 acts as the Proton acceptor in catalysis. Ca(2+) is bound by residues aspartate 74, valine 77, glycine 79, aspartate 81, and serine 83. Proline 170 serves as a coordination point for substrate. Asparagine 173 carries an N-linked (GlcNAc...) asparagine glycan. Residue histidine 200 coordinates heme b. Position 201 (threonine 201) interacts with Ca(2+). Asparagine 216 is a glycosylation site (N-linked (GlcNAc...) asparagine). Aspartate 252, threonine 255, and aspartate 260 together coordinate Ca(2+).

The protein belongs to the peroxidase family. Classical plant (class III) peroxidase subfamily. Heme b serves as cofactor. It depends on Ca(2+) as a cofactor. In terms of tissue distribution, slightly expressed in roots.

Its subcellular location is the secreted. It catalyses the reaction 2 a phenolic donor + H2O2 = 2 a phenolic radical donor + 2 H2O. In terms of biological role, removal of H(2)O(2), oxidation of toxic reductants, biosynthesis and degradation of lignin, suberization, auxin catabolism, response to environmental stresses such as wounding, pathogen attack and oxidative stress. These functions might be dependent on each isozyme/isoform in each plant tissue. The sequence is that of Peroxidase 72 (PER72) from Arabidopsis thaliana (Mouse-ear cress).